Reading from the N-terminus, the 112-residue chain is Tyrosine-protein phosphatase 17 (112 aa).

Residues 1–112 enclose the Tyrosine-protein phosphatase domain; that stretch reads WRMIWEHECC…QPHTAGPIVV (112 aa). D82 provides a ligand contact to substrate.

The protein belongs to the protein-tyrosine phosphatase family.

The catalysed reaction is O-phospho-L-tyrosyl-[protein] + H2O = L-tyrosyl-[protein] + phosphate. The polypeptide is Tyrosine-protein phosphatase 17 (STY-17) (Styela plicata (Wrinkled sea squirt)).